Reading from the N-terminus, the 425-residue chain is Formyl-CoA:oxalate CoA-transferase (425 aa).

CoA-binding positions include 17 to 18, Arg38, 72 to 75, 96 to 98, Arg104, and 136 to 139; these read QS, LDTK, NFG, and KVYE. The active-site Nucleophile is Asp168. A substrate-binding site is contributed by 247 to 249; it reads GGQ.

This sequence belongs to the CoA-transferase III family. Frc subfamily. Homodimer.

It catalyses the reaction formyl-CoA + oxalate = oxalyl-CoA + formate. Its pathway is metabolic intermediate degradation; oxalate degradation; CO(2) and formate from oxalate: step 1/2. In terms of biological role, involved in the catabolism of oxalate and in the adapatation to low pH via the induction of the oxalate-dependent acid tolerance response (ATR). Catalyzes the transfer of the CoA moiety from formyl-CoA to oxalate. The chain is Formyl-CoA:oxalate CoA-transferase from Rhodopseudomonas palustris (strain TIE-1).